The primary structure comprises 434 residues: Tol-Pal system protein TolB (434 aa).

Residues 1–24 form the signal peptide; sequence MKFSAYLTTLFIVLFSLFIQTVQA.

Belongs to the TolB family. As to quaternary structure, the Tol-Pal system is composed of five core proteins: the inner membrane proteins TolA, TolQ and TolR, the periplasmic protein TolB and the outer membrane protein Pal. They form a network linking the inner and outer membranes and the peptidoglycan layer.

The protein localises to the periplasm. Its function is as follows. Part of the Tol-Pal system, which plays a role in outer membrane invagination during cell division and is important for maintaining outer membrane integrity. The protein is Tol-Pal system protein TolB of Histophilus somni (strain 129Pt) (Haemophilus somnus).